The following is a 167-amino-acid chain: NADH-quinone oxidoreductase subunit I (167 aa).

2 4Fe-4S ferredoxin-type domains span residues 59-88 and 98-127; these read RKYK…IEAQ and VRYD…EGPN. Positions 68, 71, 74, 78, 107, 110, 113, and 117 each coordinate [4Fe-4S] cluster.

It belongs to the complex I 23 kDa subunit family. In terms of assembly, NDH-1 is composed of 14 different subunits. Subunits NuoA, H, J, K, L, M, N constitute the membrane sector of the complex. It depends on [4Fe-4S] cluster as a cofactor.

It localises to the cell inner membrane. The catalysed reaction is a quinone + NADH + 5 H(+)(in) = a quinol + NAD(+) + 4 H(+)(out). Functionally, NDH-1 shuttles electrons from NADH, via FMN and iron-sulfur (Fe-S) centers, to quinones in the respiratory chain. The immediate electron acceptor for the enzyme in this species is believed to be ubiquinone. Couples the redox reaction to proton translocation (for every two electrons transferred, four hydrogen ions are translocated across the cytoplasmic membrane), and thus conserves the redox energy in a proton gradient. This Ehrlichia canis (strain Jake) protein is NADH-quinone oxidoreductase subunit I.